The primary structure comprises 48 residues: Acidic phospholipase A2 (48 aa).

Residues Y27, G29, and G31 each coordinate Ca(2+). The cysteines at positions 28 and 44 are disulfide-linked. Residue H47 is part of the active site. Position 48 (D48) interacts with Ca(2+).

Belongs to the phospholipase A2 family. Group II subfamily. D49 sub-subfamily. Monomer. Ca(2+) is required as a cofactor. Expressed by the venom gland.

It is found in the secreted. The catalysed reaction is a 1,2-diacyl-sn-glycero-3-phosphocholine + H2O = a 1-acyl-sn-glycero-3-phosphocholine + a fatty acid + H(+). Its activity is regulated as follows. Inhibited by EDTA. Inhibited by Ba(2+), Cu(+), Fe(2+) and Zn(2+) ions and, to a lesser extent, by Mn(2+) and Mg(2+) ions. In terms of biological role, snake venom phospholipase A2 (PLA2) that shows myotoxicity and induces paw edema in mice. Exhibits indirect hemolytic activity. Inhibits platelet aggregation induced by ADP and collagen. PLA2 catalyzes the calcium-dependent hydrolysis of the 2-acyl groups in 3-sn-phosphoglycerides. The sequence is that of Acidic phospholipase A2 from Bothrops pauloensis (Neuwied's lancehead).